A 793-amino-acid polypeptide reads, in one-letter code: Ribosome biogenesis protein BOP1 homolog (793 aa).

Residues 1 to 11 (MTKKLTLKRKG) show a composition bias toward basic residues. The tract at residues 1-168 (MTKKLTLKRK…DSDTSDEEDI (168 aa)) is disordered. 3 stretches are compositionally biased toward acidic residues: residues 44–53 (EDTTDDEGID), 60–72 (SSED…DEEG), and 83–116 (SSEE…DGDE). Residues 117-129 (EKPTTSKQNKSED) are compositionally biased toward basic and acidic residues. The span at 133–143 (SSKVSKKTQPP) shows a compositional bias: polar residues. Residues 146-161 (DLVKRDPSHPEYHDSD) are compositionally biased toward basic and acidic residues. WD repeat units lie at residues 454 to 495 (GHTD…RTIE), 497 to 535 (EDVV…KVLV), 579 to 621 (NHFK…SQIP), 624 to 662 (KSKG…LVKK), 665 to 704 (TNSK…KPYQ), 708 to 747 (LHRN…DLLQ), and 763 to 793 (REDF…RLYT).

This sequence belongs to the WD repeat BOP1/ERB1 family.

Its subcellular location is the nucleus. The protein resides in the nucleolus. It is found in the nucleoplasm. Its function is as follows. Required for maturation of ribosomal RNAs and formation of the large ribosomal subunit. The polypeptide is Ribosome biogenesis protein BOP1 homolog (Drosophila ananassae (Fruit fly)).